The primary structure comprises 134 residues: Small ribosomal subunit protein uS8 (134 aa).

The protein belongs to the universal ribosomal protein uS8 family. Part of the 30S ribosomal subunit. Contacts proteins S5 and S12.

One of the primary rRNA binding proteins, it binds directly to 16S rRNA central domain where it helps coordinate assembly of the platform of the 30S subunit. This chain is Small ribosomal subunit protein uS8, found in Nitratiruptor sp. (strain SB155-2).